The chain runs to 585 residues: Arginine--tRNA ligase (585 aa).

The 'HIGH' region signature appears at 127–137; the sequence is PNTNKPLHVGH.

The protein belongs to the class-I aminoacyl-tRNA synthetase family. Monomer.

It localises to the cytoplasm. It catalyses the reaction tRNA(Arg) + L-arginine + ATP = L-arginyl-tRNA(Arg) + AMP + diphosphate. In Borreliella afzelii (strain PKo) (Borrelia afzelii), this protein is Arginine--tRNA ligase.